The sequence spans 446 residues: Ribosomal protein uS12 methylthiotransferase RimO (446 aa).

The 113-residue stretch at 9–121 folds into the MTTase N-terminal domain; that stretch reads PKVGFVSLGC…VLDAIHAALP (113 aa). The [4Fe-4S] cluster site is built by C18, C54, C83, C152, C156, and C159. The Radical SAM core domain occupies 138–375; the sequence is LTPPHYAYLK…MAVQEAISRQ (238 aa). Residues 378–445 form the TRAM domain; the sequence is QRRVGQRQRV…AHDLYGMVVS (68 aa).

Belongs to the methylthiotransferase family. RimO subfamily. It depends on [4Fe-4S] cluster as a cofactor.

Its subcellular location is the cytoplasm. It catalyses the reaction L-aspartate(89)-[ribosomal protein uS12]-hydrogen + (sulfur carrier)-SH + AH2 + 2 S-adenosyl-L-methionine = 3-methylsulfanyl-L-aspartate(89)-[ribosomal protein uS12]-hydrogen + (sulfur carrier)-H + 5'-deoxyadenosine + L-methionine + A + S-adenosyl-L-homocysteine + 2 H(+). Its function is as follows. Catalyzes the methylthiolation of an aspartic acid residue of ribosomal protein uS12. This chain is Ribosomal protein uS12 methylthiotransferase RimO, found in Acidithiobacillus ferrooxidans (strain ATCC 23270 / DSM 14882 / CIP 104768 / NCIMB 8455) (Ferrobacillus ferrooxidans (strain ATCC 23270)).